The primary structure comprises 252 residues: Phosphoribosylaminoimidazole-succinocarboxamide synthase 1 (252 aa).

Belongs to the SAICAR synthetase family.

It carries out the reaction 5-amino-1-(5-phospho-D-ribosyl)imidazole-4-carboxylate + L-aspartate + ATP = (2S)-2-[5-amino-1-(5-phospho-beta-D-ribosyl)imidazole-4-carboxamido]succinate + ADP + phosphate + 2 H(+). It participates in purine metabolism; IMP biosynthesis via de novo pathway; 5-amino-1-(5-phospho-D-ribosyl)imidazole-4-carboxamide from 5-amino-1-(5-phospho-D-ribosyl)imidazole-4-carboxylate: step 1/2. The polypeptide is Phosphoribosylaminoimidazole-succinocarboxamide synthase 1 (purC1) (Caulobacter vibrioides (strain ATCC 19089 / CIP 103742 / CB 15) (Caulobacter crescentus)).